The primary structure comprises 1050 residues: Probable E3 ubiquitin-protein ligase HERC3 (1050 aa).

RCC1 repeat units follow at residues 1-51, 52-101, 102-154, 156-207, 208-259, 261-311, and 313-366; these read MLCW…FLLE, DGEV…ALSD, RGQL…ALAA, GQFF…ALSL, SGAV…VLTK, GGVF…AFVP, and SGLI…IVKQ. Residues 951–1050 enclose the HECT domain; it reads YKGDYSATHP…LDNYEGFSLA (100 aa). Residue cysteine 1018 is the Glycyl thioester intermediate of the active site.

Post-translationally, ubiquitinated; which promotes degradation by the proteasome.

It localises to the cytoplasm. It is found in the cytoplasmic vesicle. The catalysed reaction is S-ubiquitinyl-[E2 ubiquitin-conjugating enzyme]-L-cysteine + [acceptor protein]-L-lysine = [E2 ubiquitin-conjugating enzyme]-L-cysteine + N(6)-ubiquitinyl-[acceptor protein]-L-lysine.. Its pathway is protein modification; protein ubiquitination. Its function is as follows. E3 ubiquitin-protein ligase which accepts ubiquitin from an E2 ubiquitin-conjugating enzyme in the form of a thioester and then directly transfers the ubiquitin to targeted substrates. This chain is Probable E3 ubiquitin-protein ligase HERC3 (HERC3), found in Homo sapiens (Human).